The primary structure comprises 353 residues: D-alanine--D-alanine ligase A (353 aa).

Residues 141–346 (KRLVNEAGLS…YPEIINRLVA (206 aa)) form the ATP-grasp domain. 169 to 224 (EQALGLPIFIKPARQGSSVGVHKVVTEADYQAAMSDGFTYDDKLLAEEFIQAREVE) contacts ATP. Positions 300, 313, and 315 each coordinate Mg(2+).

This sequence belongs to the D-alanine--D-alanine ligase family. It depends on Mg(2+) as a cofactor. Mn(2+) serves as cofactor.

The protein resides in the cytoplasm. It catalyses the reaction 2 D-alanine + ATP = D-alanyl-D-alanine + ADP + phosphate + H(+). Its pathway is cell wall biogenesis; peptidoglycan biosynthesis. In terms of biological role, cell wall formation. The sequence is that of D-alanine--D-alanine ligase A from Brucella suis biovar 1 (strain 1330).